Consider the following 3625-residue polypeptide: Spectinabilin polyketide synthase system protein NorA' (3625 aa).

In terms of domain architecture, Ketosynthase family 3 (KS3) 1 spans 33–459 (REPVAVVSMA…GTNAHVILEQ (427 aa)). Active-site for beta-ketoacyl synthase 1 activity residues include C206, H341, and H381. In terms of domain architecture, Malonyl-CoA:ACP transacylase (MAT) 1 spans 564–881 (LVFPGQGSQW…SLGELFAGGR (318 aa)). The tract at residues 930–1054 (HPWWGAVTEL…GTLTRTARPA (125 aa)) is N-terminal hotdog fold 1. Residues 930 to 1200 (HPWWGAVTEL…VRPLTPGSGA (271 aa)) form the PKS/mFAS DH 1 domain. Catalysis depends on H962, which acts as the Proton acceptor; for dehydratase activity 1. The interval 1066 to 1200 (ADPLPVDRIY…VRPLTPGSGA (135 aa)) is C-terminal hotdog fold 1. The active-site Proton donor; for dehydratase activity 1 is D1125. Residues 1443-1620 (GTVLVTGAAG…LSLAWGLWAE (178 aa)) enclose the Ketoreductase (KR) 1 domain. Residues 1722–1797 (GAVLETVRAQ…SLAAHLLGRL (76 aa)) form the Carrier 1 domain. Position 1757 is an O-(pantetheine 4'-phosphoryl)serine (S1757). In terms of domain architecture, Ketosynthase family 3 (KS3) 2 spans 1815–2231 (DEPIAIIGMA…GTNAHVVLEQ (417 aa)). Residues C1978, H2113, and H2153 each act as for beta-ketoacyl synthase 2 activity in the active site. One can recognise a Malonyl-CoA:ACP transacylase (MAT) 2 domain in the interval 2336 to 2656 (VFVFPGQGAQ…VAEAHTRGIA (321 aa)). The interval 2704 to 2829 (HPLLGARMEL…GLLSEEEPAT (126 aa)) is N-terminal hotdog fold 2. Positions 2704–2981 (HPLLGARMEL…ARPVPAGQLR (278 aa)) constitute a PKS/mFAS DH 2 domain. Catalysis depends on H2736, which acts as the Proton acceptor; for dehydratase activity 2. A C-terminal hotdog fold 2 region spans residues 2842–2981 (AEPIELVGFY…ARPVPAGQLR (140 aa)). Residue D2903 is the Proton donor; for dehydratase activity 2 of the active site. The region spanning 3182–3361 (GTVLITGASG…QSLAWGLWSE (180 aa)) is the Ketoreductase (KR) 2 domain. The Carrier 2 domain maps to 3462–3537 (RQLTDLVRAQ…ALAGHLSTRL (76 aa)). S3497 carries the O-(pantetheine 4'-phosphoryl)serine modification.

In terms of assembly, the spectinabilin polyketide synthase complex is composed of 4 proteins, NorA, NorA', NorB and NorC. The complex comprises 6 modules with a total of 28 catalytic domains catalyzing 7 chain elongations. NorA comprises one module, NorA' two modules, NorB one module and NorC two modules. The cofactor is pantetheine 4'-phosphate.

It carries out the reaction 4-nitrobenzoyl-CoA + 6 (S)-methylmalonyl-CoA + malonyl-CoA + 6 NADPH + 12 H(+) = demethyldeoxyspectinabilin + 7 CO2 + 6 NADP(+) + 8 CoA + 5 H2O. It functions in the pathway antibiotic biosynthesis. Its pathway is polyketide biosynthesis. In terms of biological role, component of a type I modular polyketide synthase (PKS) that generates the backbone of the antibiotic spectinabilin (also known as neoaureothin), a nitroaryl-substituted polyketide metabolite. This PKS system accepts the unusual starter unit 4-nitrobenzoyl-CoA and extends it by 6 molecules of (S)-methylmalonyl-CoA and a single molecule of malonyl-CoA. The polypeptide is Spectinabilin polyketide synthase system protein NorA' (Streptomyces orinoci (Streptoverticillium orinoci)).